The primary structure comprises 501 residues: 1-aminocyclopropane-1-carboxylate synthase-like protein 1 (501 aa).

Glutamate 105 lines the substrate pocket. At lysine 323 the chain carries N6-(pyridoxal phosphate)lysine. Positions 480 to 501 are disordered; the sequence is GKSQVAEDPRPSQSQEPSDQRR. The segment covering 490–501 has biased composition (polar residues); it reads PSQSQEPSDQRR.

Belongs to the class-I pyridoxal-phosphate-dependent aminotransferase family.

Does not catalyze the synthesis of 1-aminocyclopropane-1-carboxylate but is capable of catalyzing the deamination of L-vinylglycine. This Homo sapiens (Human) protein is 1-aminocyclopropane-1-carboxylate synthase-like protein 1 (ACCS).